Consider the following 147-residue polypeptide: UPF0178 protein Patl_1318 (147 aa).

The protein belongs to the UPF0178 family.

The sequence is that of UPF0178 protein Patl_1318 from Pseudoalteromonas atlantica (strain T6c / ATCC BAA-1087).